Here is a 185-residue protein sequence, read N- to C-terminus: Lipid A acyltransferase PagP (185 aa).

Residues 1-14 (MKLKPVLYLLMLLG) form the signal peptide. C15 carries N-palmitoyl cysteine lipidation. C15 is lipidated: S-diacylglycerol cysteine. Catalysis depends on residues H57, D100, and S101.

This sequence belongs to the lipid A palmitoyltransferase family. Homodimer.

Its subcellular location is the cell outer membrane. It carries out the reaction a lipid A + a 1,2-diacyl-sn-glycero-3-phosphocholine = a hepta-acyl lipid A + a 2-acyl-sn-glycero-3-phosphocholine. The catalysed reaction is a lipid IVA + a 1,2-diacyl-sn-glycero-3-phosphocholine = a lipid IVB + a 2-acyl-sn-glycero-3-phosphocholine. The enzyme catalyses a lipid IIA + a 1,2-diacyl-sn-glycero-3-phosphocholine = a lipid IIB + a 2-acyl-sn-glycero-3-phosphocholine. Transfers a fatty acid residue from the sn-1 position of a phospholipid to the N-linked hydroxyfatty acid chain on the proximal unit of lipid A or its precursors. The sequence is that of Lipid A acyltransferase PagP from Erwinia pyrifoliae (strain DSM 12163 / CIP 106111 / Ep16/96).